The primary structure comprises 388 residues: Cdc42 effector protein 1 (388 aa).

Residues 1 to 28 (MPGPQGGTGAPSMSLGKLSPVGWVPSSH) form a disordered region. 2 positions are modified to phosphoserine: S19 and S27. Residue T34 is modified to Phosphothreonine. The region spanning 38–52 (ISPPLGDFRHTMHVG) is the CRIB domain. S39 carries the post-translational modification Phosphoserine. Position 53 is an omega-N-methylarginine (R53). Phosphoserine occurs at positions 65, 77, 101, 113, 121, and 139. Residues 165 to 206 (RLPRVEKHSSRDRDHDRDPDHSQDREQSSSPSEPNPNPELRR) form a disordered region. A compositionally biased stretch (basic and acidic residues) spans 167–191 (PRVEKHSSRDRDHDRDPDHSQDREQ). A phosphoserine mark is found at S193, S207, S209, and S212. 2 repeat units span residues 237-243 (PAANPPA) and 250-256 (PTAKPPA). The disordered stretch occupies residues 237–257 (PAANPPAPAANPAPTAKPPAD). The segment at 237 to 270 (PAANPPAPAANPAPTAKPPADAVTTLDTVTSLPA) is 2 X 7 AA tandem repeats of [PT]-[AT]-A-[ENT]-[PT]-[PTS]-[AG]. The segment covering 239–253 (ANPPAPAANPAPTAK) has biased composition (pro residues). Phosphoserine is present on residues S298, S318, S347, and S350.

This sequence belongs to the BORG/CEP family. Interacts with RHOQ and CDC42, in a GTP-dependent manner.

The protein resides in the endomembrane system. The protein localises to the cytoplasm. It localises to the cytoskeleton. Functionally, probably involved in the organization of the actin cytoskeleton. Induced membrane extensions in fibroblasts. This Rattus norvegicus (Rat) protein is Cdc42 effector protein 1.